The sequence spans 604 residues: NADP-dependent malic enzyme, mitochondrial (604 aa).

Positions 29-50 are disordered; the sequence is APAQGCHSKPGPARPVPLKKRG. Tyrosine 137 serves as the catalytic Proton donor. Arginine 190 contributes to the NAD(+) binding site. The active-site Proton acceptor is lysine 208. A divalent metal cation contacts are provided by glutamate 280, aspartate 281, and aspartate 304. An NAD(+)-binding site is contributed by aspartate 304. The residue at position 371 (serine 371) is a Phosphoserine. Residue asparagine 443 participates in NAD(+) binding.

It belongs to the malic enzymes family. Mg(2+) is required as a cofactor. The cofactor is Mn(2+). Expressed predominantly in organs with a low-division rate.

It is found in the mitochondrion matrix. It catalyses the reaction (S)-malate + NADP(+) = pyruvate + CO2 + NADPH. The catalysed reaction is oxaloacetate + H(+) = pyruvate + CO2. Catalyzes the oxidative decarboxylation of (S)-malate to pyruvate using NADP(+) as a cofactor. Can also reverse the decarboxylation reaction, but only with significantly lower efficiency. The sequence is that of NADP-dependent malic enzyme, mitochondrial from Homo sapiens (Human).